The following is a 969-amino-acid chain: Putative zinc protease mug138 (969 aa).

Histidine 68 serves as a coordination point for Zn(2+). Glutamate 71 functions as the Proton acceptor in the catalytic mechanism. Residues histidine 72 and glutamate 149 each contribute to the Zn(2+) site.

This sequence belongs to the peptidase M16 family.

It localises to the cytoplasm. In terms of biological role, has a role in meiosis. The chain is Putative zinc protease mug138 (mug138) from Schizosaccharomyces pombe (strain 972 / ATCC 24843) (Fission yeast).